The following is a 197-amino-acid chain: UPF0725 protein At5g41640 (197 aa).

Belongs to the UPF0725 (EMB2204) family.

The sequence is that of UPF0725 protein At5g41640 from Arabidopsis thaliana (Mouse-ear cress).